A 554-amino-acid chain; its full sequence is Putative acyl-coenzyme A synthetase (554 aa).

195-206 (LLYSSGTTGPPK) contributes to the AMP binding site.

Belongs to the ATP-dependent AMP-binding enzyme family.

The chain is Putative acyl-coenzyme A synthetase from Emericella nidulans (strain FGSC A4 / ATCC 38163 / CBS 112.46 / NRRL 194 / M139) (Aspergillus nidulans).